The primary structure comprises 353 residues: UPF0283 membrane protein YcjF (353 aa).

3 helical membrane-spanning segments follow: residues 70–90 (MVMGGLALFGASVVGQGIQWT), 100–120 (VALGGCAAGALIIGAGVGSVV), and 213–233 (ESTLMIAVSPLALVDMAFIAW).

Belongs to the UPF0283 family.

It localises to the cell inner membrane. The chain is UPF0283 membrane protein YcjF from Shigella flexneri serotype 5b (strain 8401).